A 258-amino-acid chain; its full sequence is Snake venom serine protease PTLE1 (258 aa).

An N-terminal signal peptide occupies residues 1–18 (MVLIRVLANLLILQLSYA). The propeptide occupies 19 to 24 (QKSSEL). A Peptidase S1 domain is found at 25–249 (VIGGDECNIN…YTDWIENIIA (225 aa)). Cystine bridges form between Cys-31-Cys-163, Cys-50-Cys-66, Cys-98-Cys-256, Cys-142-Cys-210, Cys-174-Cys-189, and Cys-200-Cys-225. Asn-44 carries an N-linked (GlcNAc...) asparagine glycan. His-65 functions as the Charge relay system in the catalytic mechanism. 2 N-linked (GlcNAc...) asparagine glycosylation sites follow: Asn-79 and Asn-103. The Charge relay system role is filled by Asp-110. Asn-121 carries an N-linked (GlcNAc...) asparagine glycan. Ser-204 acts as the Charge relay system in catalysis.

This sequence belongs to the peptidase S1 family. Snake venom subfamily. Monomer. Expressed by the venom gland.

It is found in the secreted. Its function is as follows. Snake venom serine protease that may act in the hemostasis system of the prey. The sequence is that of Snake venom serine protease PTLE1 from Gloydius halys (Chinese water mocassin).